Reading from the N-terminus, the 156-residue chain is ATP synthase subunit b (156 aa).

The chain crosses the membrane as a helical span at residues 11-31 (AIAFAVFVWFCMKYVWPPLLA).

The protein belongs to the ATPase B chain family. In terms of assembly, F-type ATPases have 2 components, F(1) - the catalytic core - and F(0) - the membrane proton channel. F(1) has five subunits: alpha(3), beta(3), gamma(1), delta(1), epsilon(1). F(0) has three main subunits: a(1), b(2) and c(10-14). The alpha and beta chains form an alternating ring which encloses part of the gamma chain. F(1) is attached to F(0) by a central stalk formed by the gamma and epsilon chains, while a peripheral stalk is formed by the delta and b chains.

The protein localises to the cell inner membrane. F(1)F(0) ATP synthase produces ATP from ADP in the presence of a proton or sodium gradient. F-type ATPases consist of two structural domains, F(1) containing the extramembraneous catalytic core and F(0) containing the membrane proton channel, linked together by a central stalk and a peripheral stalk. During catalysis, ATP synthesis in the catalytic domain of F(1) is coupled via a rotary mechanism of the central stalk subunits to proton translocation. Functionally, component of the F(0) channel, it forms part of the peripheral stalk, linking F(1) to F(0). In Psychromonas ingrahamii (strain DSM 17664 / CCUG 51855 / 37), this protein is ATP synthase subunit b.